Reading from the N-terminus, the 467-residue chain is F-box protein pof9 (467 aa).

Positions 3–49 constitute an F-box domain; sequence KSPFLELSYDILLEISTYLDYKDIVHLSETCKSLSYVFDDKTIWHRF. RCC1 repeat units follow at residues 77–131, 302–354, and 355–417; these read RGYA…LLNE, ETFT…YLTS, and DHSI…AAGG.

In terms of assembly, interacts with skp1.

It localises to the cytoplasm. The protein resides in the nucleus. This is F-box protein pof9 (pof9) from Schizosaccharomyces pombe (strain 972 / ATCC 24843) (Fission yeast).